A 246-amino-acid chain; its full sequence is MTNNAAAPLYSLRGLPLIGWRDMSHALNYLFADGQLKQGTLVAINAEKLLTAEDNPEVRALIAAAEFKYADGISVVRSIRKKFPQAQVSRVAGADLWEALMARAGKEGTPVFLVGGKPEVLAQTEAKLRTQWNVNIVGSQDGYFTPEQRQALFSRIHASGAKIVTVAMGSPKQELLMRDCREVHPHALYMGVGGTYDVFTGHVKRAPKIWQNLGLEWLYRLLSQPKRITRQMRLLRYLRWHYTGDL.

It belongs to the glycosyltransferase 26 family.

It carries out the reaction UDP-N-acetyl-alpha-D-mannosaminouronate + N-acetyl-alpha-D-glucosaminyl-di-trans,octa-cis-undecaprenyl diphosphate = beta-D-ManNAcA-(1-&gt;4)-alpha-D-GlcNAc-di-trans,octa-cis-undecaprenyl diphosphate + UDP + H(+). It functions in the pathway bacterial outer membrane biogenesis; enterobacterial common antigen biosynthesis. Its function is as follows. Catalyzes the synthesis of Und-PP-GlcNAc-ManNAcA (Lipid II), the second lipid-linked intermediate involved in enterobacterial common antigen (ECA) synthesis. The sequence is that of UDP-N-acetyl-D-mannosaminuronic acid transferase from Salmonella schwarzengrund (strain CVM19633).